Reading from the N-terminus, the 339-residue chain is Ribonucleoside-diphosphate reductase subunit beta (339 aa).

2 residues coordinate Fe cation: D87 and H121. The active site involves Y125. Residue H215 participates in Fe cation binding.

The protein belongs to the ribonucleoside diphosphate reductase small chain family. In terms of assembly, tetramer of two alpha and two beta subunits. The cofactor is Fe cation.

It catalyses the reaction a 2'-deoxyribonucleoside 5'-diphosphate + [thioredoxin]-disulfide + H2O = a ribonucleoside 5'-diphosphate + [thioredoxin]-dithiol. In terms of biological role, provides the precursors necessary for DNA synthesis. Catalyzes the biosynthesis of deoxyribonucleotides from the corresponding ribonucleotides. This Mycoplasma pneumoniae (strain ATCC 29342 / M129 / Subtype 1) (Mycoplasmoides pneumoniae) protein is Ribonucleoside-diphosphate reductase subunit beta (nrdF).